The following is a 700-amino-acid chain: uncharacterized protein (700 aa).

The [4Fe-4S] cluster site is built by Cys-307, Cys-310, Cys-314, and Cys-558.

Belongs to the AOR/FOR family. [4Fe-4S] cluster is required as a cofactor. Requires Mo-molybdopterin as cofactor. Tungstopterin serves as cofactor.

This is an uncharacterized protein from Escherichia coli (strain K12).